Here is a 50-residue protein sequence, read N- to C-terminus: Protein PsbN (50 aa).

The helical transmembrane segment at 14 to 34 (VAVTILAVLLALTGFGLWTAF) threads the bilayer.

This sequence belongs to the PsbN family.

Its subcellular location is the cellular thylakoid membrane. Functionally, may play a role in photosystem I and II biogenesis. This chain is Protein PsbN, found in Prochlorococcus marinus subsp. pastoris (strain CCMP1986 / NIES-2087 / MED4).